Consider the following 295-residue polypeptide: Tyrosine recombinase XerD (295 aa).

The Core-binding (CB) domain occupies 1 to 85 (METIIEEYLR…TIRSFHQFAI (85 aa)). The Tyr recombinase domain maps to 106–289 (KLPDVLNVDE…SKSQIRKMYN (184 aa)). Active-site residues include Arg-146, Lys-170, His-241, Arg-244, and His-267. The active-site O-(3'-phospho-DNA)-tyrosine intermediate is the Tyr-276.

It belongs to the 'phage' integrase family. XerD subfamily. Forms a cyclic heterotetrameric complex composed of two molecules of XerC and two molecules of XerD.

Its subcellular location is the cytoplasm. Site-specific tyrosine recombinase, which acts by catalyzing the cutting and rejoining of the recombining DNA molecules. The XerC-XerD complex is essential to convert dimers of the bacterial chromosome into monomers to permit their segregation at cell division. It also contributes to the segregational stability of plasmids. The chain is Tyrosine recombinase XerD from Staphylococcus aureus (strain COL).